The following is a 59-amino-acid chain: Putative potassium channel toxin Ts23 (59 aa).

Positions 1–22 (MKAFYGILIIFILISMLDLSQQ) are cleaved as a signal peptide. 3 disulfide bridges follow: cysteine 29–cysteine 50, cysteine 35–cysteine 55, and cysteine 39–cysteine 57.

It belongs to the short scorpion toxin superfamily. Potassium channel inhibitor family. Alpha-KTx 04 subfamily. As to expression, expressed by the venom gland.

Its subcellular location is the secreted. Functionally, potently blocks Kv1.1/KCNA1 (85%), Kv1.2/KCNA2 (91%), Kv1.3/KCNA3 (89%), Kv1.6/KCNA6 (94%), and Shaker (97%). The polypeptide is Putative potassium channel toxin Ts23 (Tityus serrulatus (Brazilian scorpion)).